Here is a 374-residue protein sequence, read N- to C-terminus: Alcohol dehydrogenase class-3 (374 aa).

Ser2 is modified (N-acetylserine). The Zn(2+) site is built by Cys45, His67, Cys97, Cys100, Cys103, Cys111, and Cys174. An N6-succinyllysine modification is found at Lys233. Ser247 is modified (phosphoserine). The residue at position 315 (Lys315) is an N6-succinyllysine. Ser324 and Ser351 each carry phosphoserine.

The protein belongs to the zinc-containing alcohol dehydrogenase family. Class-III subfamily. Homodimer. Requires Zn(2+) as cofactor.

The protein resides in the cytoplasm. It carries out the reaction a primary alcohol + NAD(+) = an aldehyde + NADH + H(+). The enzyme catalyses a secondary alcohol + NAD(+) = a ketone + NADH + H(+). It catalyses the reaction S-(hydroxymethyl)glutathione + NADP(+) = S-formylglutathione + NADPH + H(+). The catalysed reaction is S-(hydroxymethyl)glutathione + NAD(+) = S-formylglutathione + NADH + H(+). It carries out the reaction 20-oxo-(5Z,8Z,11Z,14Z)-eicosatetraenoate + NAD(+) + H2O = (5Z,8Z,11Z,14Z)-eicosatetraenedioate + NADH + 2 H(+). The enzyme catalyses 20-hydroxy-(5Z,8Z,11Z,14Z)-eicosatetraenoate + NAD(+) = 20-oxo-(5Z,8Z,11Z,14Z)-eicosatetraenoate + NADH + H(+). It catalyses the reaction S-nitrosoglutathione + NADH + H(+) = S-(hydroxysulfenamide)glutathione + NAD(+). Its function is as follows. Catalyzes the oxidation of long-chain primary alcohols and the oxidation of S-(hydroxymethyl) glutathione. Also oxidizes long chain omega-hydroxy fatty acids, such as 20-HETE, producing both the intermediate aldehyde, 20-oxoarachidonate and the end product, a dicarboxylic acid, (5Z,8Z,11Z,14Z)-eicosatetraenedioate. Class-III ADH is remarkably ineffective in oxidizing ethanol. Required for clearance of cellular formaldehyde, a cytotoxic and carcinogenic metabolite that induces DNA damage. Also acts as a S-nitroso-glutathione reductase by catalyzing the NADH-dependent reduction of S-nitrosoglutathione, thereby regulating protein S-nitrosylation. The protein is Alcohol dehydrogenase class-3 of Equus caballus (Horse).